The primary structure comprises 95 residues: uncharacterized protein (95 aa).

The signal sequence occupies residues 1–19 (MAILMLSLQLILLLIPSIS). N-linked (GlcNAc...) asparagine glycosylation is found at N38 and N41.

It localises to the secreted. This is an uncharacterized protein from Homo sapiens (Human).